The primary structure comprises 1043 residues: Liprin-alpha-4 (1043 aa).

Coiled coils occupy residues 24–332 (EKVR…GRGG) and 426–470 (ILDA…RVTS). The interval 498–617 (SASPPLSGRS…AKRKGIKSSI (120 aa)) is disordered. A Phosphoserine modification is found at Ser500. Residues 505–516 (GRSTPKLTSRSA) show a composition bias toward polar residues. Ser541 is subject to Phosphoserine. Residues 544–555 (SREENREDKATI) are compositionally biased toward basic and acidic residues. A compositionally biased stretch (low complexity) spans 590–602 (QDSNPSSSNSSQD). SAM domains are found at residues 688–754 (WDGP…MVSL), 803–867 (NHEW…LKRL), and 891–960 (WTND…LLAL). A coiled-coil region spans residues 864–890 (LKRLNYDRKELEKRREESQHEIKDVLV).

This sequence belongs to the liprin family. Liprin-alpha subfamily. Forms homodimers and heterodimers with liprins-alpha and liprins-beta. Interacts with the second PTPase domain of PTPRD, PTPRF and PTPRS. Interacts with RIMS1 and RIMS2. Interacts with GIT1 and GIT2. Interacts with GRIP1. Interacts with KIF1A.

It localises to the cytoplasm. The protein localises to the cell surface. In terms of biological role, may regulate the disassembly of focal adhesions. May localize receptor-like tyrosine phosphatases type 2A at specific sites on the plasma membrane, possibly regulating their interaction with the extracellular environment and their association with substrates. This Rattus norvegicus (Rat) protein is Liprin-alpha-4 (Ppfia4).